The sequence spans 292 residues: ATP synthase gamma chain (292 aa).

It belongs to the ATPase gamma chain family. As to quaternary structure, F-type ATPases have 2 components, CF(1) - the catalytic core - and CF(0) - the membrane proton channel. CF(1) has five subunits: alpha(3), beta(3), gamma(1), delta(1), epsilon(1). CF(0) has three main subunits: a, b and c.

It is found in the cell inner membrane. Functionally, produces ATP from ADP in the presence of a proton gradient across the membrane. The gamma chain is believed to be important in regulating ATPase activity and the flow of protons through the CF(0) complex. The sequence is that of ATP synthase gamma chain from Hydrogenobaculum sp. (strain Y04AAS1).